The sequence spans 211 residues: MLNAIRKNGLTLAIFACATTGLVAMTQYLTKDQITLQEQKQLSSVLNQVIPESAHDNLLFESCTLVSDSALGSDKAMPAYIATRNGQATAIAIESVAPDGYNGAIKIITGIDTSGTVLGTRVLSHQETPGLGDKIDLRVTDWITSFTGKQLNDGNYNSWKVRKDGGEFDQFTGATITPRAVVKAVRNTVEFVNTHREQILNQPLNCGGHYE.

The helical transmembrane segment at 9–29 (GLTLAIFACATTGLVAMTQYL) threads the bilayer. T175 is modified (FMN phosphoryl threonine).

It belongs to the RnfG family. In terms of assembly, the complex is composed of six subunits: RnfA, RnfB, RnfC, RnfD, RnfE and RnfG. The cofactor is FMN.

It is found in the cell inner membrane. In terms of biological role, part of a membrane-bound complex that couples electron transfer with translocation of ions across the membrane. The chain is Ion-translocating oxidoreductase complex subunit G from Vibrio vulnificus (strain YJ016).